The following is a 143-amino-acid chain: Transcription antitermination protein NusB (143 aa).

It belongs to the NusB family.

Involved in transcription antitermination. Required for transcription of ribosomal RNA (rRNA) genes. Binds specifically to the boxA antiterminator sequence of the ribosomal RNA (rrn) operons. This is Transcription antitermination protein NusB from Dehalococcoides mccartyi (strain CBDB1).